The following is an 863-amino-acid chain: Alanine--tRNA ligase (863 aa).

4 residues coordinate Zn(2+): His552, His556, Cys654, and His658.

This sequence belongs to the class-II aminoacyl-tRNA synthetase family. The cofactor is Zn(2+).

The protein localises to the cytoplasm. The enzyme catalyses tRNA(Ala) + L-alanine + ATP = L-alanyl-tRNA(Ala) + AMP + diphosphate. Its function is as follows. Catalyzes the attachment of alanine to tRNA(Ala) in a two-step reaction: alanine is first activated by ATP to form Ala-AMP and then transferred to the acceptor end of tRNA(Ala). Also edits incorrectly charged Ser-tRNA(Ala) and Gly-tRNA(Ala) via its editing domain. This chain is Alanine--tRNA ligase, found in Nitrosomonas eutropha (strain DSM 101675 / C91 / Nm57).